Consider the following 195-residue polypeptide: Imidazoleglycerol-phosphate dehydratase (195 aa).

Belongs to the imidazoleglycerol-phosphate dehydratase family.

Its subcellular location is the cytoplasm. The enzyme catalyses D-erythro-1-(imidazol-4-yl)glycerol 3-phosphate = 3-(imidazol-4-yl)-2-oxopropyl phosphate + H2O. It functions in the pathway amino-acid biosynthesis; L-histidine biosynthesis; L-histidine from 5-phospho-alpha-D-ribose 1-diphosphate: step 6/9. This Koribacter versatilis (strain Ellin345) protein is Imidazoleglycerol-phosphate dehydratase.